A 133-amino-acid polypeptide reads, in one-letter code: ATP synthase epsilon chain (133 aa).

The protein belongs to the ATPase epsilon chain family. As to quaternary structure, F-type ATPases have 2 components, CF(1) - the catalytic core - and CF(0) - the membrane proton channel. CF(1) has five subunits: alpha(3), beta(3), gamma(1), delta(1), epsilon(1). CF(0) has three main subunits: a, b and c.

The protein resides in the cell membrane. Its function is as follows. Produces ATP from ADP in the presence of a proton gradient across the membrane. This Staphylococcus haemolyticus (strain JCSC1435) protein is ATP synthase epsilon chain.